Consider the following 187-residue polypeptide: MTDTLDLDRAVATLTQGGVIAYPTEAVWGLGCDPRQEAAVLRLLEIKRRPVEKGVIVVASSVDLLRDWVDIDALEPARRQDVLASWPGPHTWILPVTARAPRWVTGEHDGLAVRISAHPVVAALCAAWGAPLVSTSANLAGEPPARSRAALDPALLATIDGVVDGETGALAQPTQIRDARSGQILRD.

The YrdC-like domain maps to 4 to 187 (TLDLDRAVAT…DARSGQILRD (184 aa)).

This sequence belongs to the SUA5 family. TsaC subfamily.

It is found in the cytoplasm. The enzyme catalyses L-threonine + hydrogencarbonate + ATP = L-threonylcarbamoyladenylate + diphosphate + H2O. Functionally, required for the formation of a threonylcarbamoyl group on adenosine at position 37 (t(6)A37) in tRNAs that read codons beginning with adenine. Catalyzes the conversion of L-threonine, HCO(3)(-)/CO(2) and ATP to give threonylcarbamoyl-AMP (TC-AMP) as the acyladenylate intermediate, with the release of diphosphate. The protein is Threonylcarbamoyl-AMP synthase of Xanthomonas euvesicatoria pv. vesicatoria (strain 85-10) (Xanthomonas campestris pv. vesicatoria).